A 901-amino-acid polypeptide reads, in one-letter code: Protein translocase subunit SecA (901 aa).

ATP is bound by residues glutamine 85, 103-107 (GEGKT), and aspartate 510. Residues 836–845 (EEAERARQEM) are compositionally biased toward basic and acidic residues. The disordered stretch occupies residues 836-901 (EEAERARQEM…HCHGSRVARQ (66 aa)). The span at 849-866 (INQNNLPVDENSQTTQNS) shows a compositional bias: polar residues. 4 residues coordinate Zn(2+): cysteine 882, cysteine 884, cysteine 893, and histidine 894. The segment covering 888–901 (KKYKHCHGSRVARQ) has biased composition (basic residues).

This sequence belongs to the SecA family. In terms of assembly, monomer and homodimer. Part of the essential Sec protein translocation apparatus which comprises SecA, SecYEG and auxiliary proteins SecDF-YajC and YidC. It depends on Zn(2+) as a cofactor.

Its subcellular location is the cell inner membrane. The protein resides in the cytoplasm. The enzyme catalyses ATP + H2O + cellular proteinSide 1 = ADP + phosphate + cellular proteinSide 2.. Functionally, part of the Sec protein translocase complex. Interacts with the SecYEG preprotein conducting channel. Has a central role in coupling the hydrolysis of ATP to the transfer of proteins into and across the cell membrane, serving both as a receptor for the preprotein-SecB complex and as an ATP-driven molecular motor driving the stepwise translocation of polypeptide chains across the membrane. In Haemophilus influenzae (strain PittEE), this protein is Protein translocase subunit SecA.